Reading from the N-terminus, the 368-residue chain is RNA polymerase sigma factor SigA (368 aa).

Basic and acidic residues predominate over residues 71 to 83 (NEKDSSDTDDKIN). Residues 71–90 (NEKDSSDTDDKINPNDLSAP) are disordered. The tract at residues 135-205 (LAEANLRLVV…TRAIADQART (71 aa)) is sigma-70 factor domain-2. The Interaction with polymerase core subunit RpoC motif lies at 159-162 (DLIQ). The tract at residues 214–290 (ETINKLIRVQ…DQEAQSPSDH (77 aa)) is sigma-70 factor domain-3. The tract at residues 303–356 (VLDTLTDREENVLRLRFGLDDGRTRTLEEVGKVFGVTRERIRQIEAKALRKLRH) is sigma-70 factor domain-4. Residues 329 to 348 (LEEVGKVFGVTRERIRQIEA) constitute a DNA-binding region (H-T-H motif).

The protein belongs to the sigma-70 factor family. RpoD/SigA subfamily. Interacts transiently with the RNA polymerase catalytic core.

The protein localises to the cytoplasm. Sigma factors are initiation factors that promote the attachment of RNA polymerase to specific initiation sites and are then released. This sigma factor is the primary sigma factor during exponential growth. The polypeptide is RNA polymerase sigma factor SigA (Staphylococcus epidermidis (strain ATCC 35984 / DSM 28319 / BCRC 17069 / CCUG 31568 / BM 3577 / RP62A)).